The chain runs to 252 residues: ATP synthase subunit a (252 aa).

5 consecutive transmembrane segments (helical) span residues 33-53 (GQVFITTWFVMALLIAVAFVA), 92-112 (VPFVGTLFLFIFVCNWSGALV), 130-150 (DINTTVALALLVSLAYFYAGL), 196-216 (LVVSVLVLLVPLFVPLPVMVL), and 217-237 (GLFTSAIQALVFATLAATYIG).

It belongs to the ATPase A chain family. F-type ATPases have 2 components, CF(1) - the catalytic core - and CF(0) - the membrane proton channel. CF(1) has five subunits: alpha(3), beta(3), gamma(1), delta(1), epsilon(1). CF(0) has four main subunits: a, b, b' and c.

It is found in the cellular thylakoid membrane. Key component of the proton channel; it plays a direct role in the translocation of protons across the membrane. The chain is ATP synthase subunit a from Thermosynechococcus vestitus (strain NIES-2133 / IAM M-273 / BP-1).